The following is a 101-amino-acid chain: Chaperone modulatory protein CbpM (101 aa).

It belongs to the CbpM family.

Interacts with CbpA and inhibits both the DnaJ-like co-chaperone activity and the DNA binding activity of CbpA. Together with CbpA, modulates the activity of the DnaK chaperone system. Does not inhibit the co-chaperone activity of DnaJ. In Salmonella agona (strain SL483), this protein is Chaperone modulatory protein CbpM.